The chain runs to 325 residues: Diadenosine 5',5'''-P1,P4-tetraphosphate phosphorylase 2 (325 aa).

Substrate contacts are provided by residues Lys-53, 92–93, Asn-148, and 154–157; these read NK and GSSQ. The active-site Nucleophile is the His-161. Substrate contacts are provided by residues Gln-163, 277 to 279, Met-284, and Lys-288; that span reads NST.

It belongs to the ATP adenylyltransferase family. Monomer. A divalent metal cation is required as a cofactor.

Its subcellular location is the cytoplasm. It localises to the nucleus. The catalysed reaction is ADP + ATP + H(+) = P(1),P(4)-bis(5'-adenosyl) tetraphosphate + phosphate. It catalyses the reaction sulfate + ADP + H(+) = adenosine 5'-phosphosulfate + phosphate. Ap4A phosphorylase catalyzes the phosphorolytic degradation of bis(5'-adenosyl) tetraphosphate (Ap4A) into ADP and ATP. Can also use other Np4N' nucleotides (where N and N' stand for A,C,G or U) as substrates, but prefers A-containing substrates. Cannot catalyze the reverse reaction. Additionally, this enzyme can also catalyze the phosphorolytic degradation of adenosine 5'-phosphosulfate (AMPS) into ADP and sulfate, the reversible exchange reaction between inorganic phosphate and the beta-phosphate of a nucleoside diphosphate (NDP), and the synthesis of Ap4A from AMPS plus ATP. The polypeptide is Diadenosine 5',5'''-P1,P4-tetraphosphate phosphorylase 2 (Saccharomyces cerevisiae (strain ATCC 204508 / S288c) (Baker's yeast)).